The primary structure comprises 301 residues: Cuticle collagen 1 (301 aa).

The N-terminal stretch at Met1 to Ser37 is a signal peptide. The interval Arg79–Arg82 is furin-like endopeptidase recognition region. Triple-helical region stretches follow at residues Gly105–Pro134, Gly153–Asp179, Gly183–Pro209, and Gly218–Cys283. The segment at Pro109–Pro284 is disordered. Pro residues-rich tracts occupy residues Pro131 to Pro164 and Ser184 to Pro193. Residues Ala194 to Ala210 show a composition bias toward low complexity. The span at Ser226 to Pro258 shows a compositional bias: pro residues.

It belongs to the cuticular collagen family. In terms of assembly, collagen polypeptide chains are complexed within the cuticle by disulfide bonds and other types of covalent cross-links.

The protein resides in the secreted. Its subcellular location is the extracellular space. Its function is as follows. Secreted collagen that forms part of the nematode cuticle, which functions as an exoskeleton and a barrier to protect the worm from its environment. Secretion and subsequent incorporation into the cuticle is likely mediated by bli-4, which probably cleaves at the N-terminal consensus furin cleavage site. The chain is Cuticle collagen 1 (sqt-3) from Caenorhabditis elegans.